The sequence spans 419 residues: Appendage-associated protein (419 aa).

The N-terminal stretch at 1 to 39 is a signal peptide; the sequence is MIVTYGTVGCPVSRGGSPGCGRRIAEELRLAEDARLRLA. Residues 232 to 262 are a coiled coil; sequence ERQKAQRRREERAAKAREELRKELNDIDAKW.

It localises to the secreted. Associates with actin filament appendages that are formed in the inclusion appendages of the parasitophorous vacuole during infection of the host erythrocyte. The polypeptide is Appendage-associated protein (Anaplasma marginale (strain St. Maries)).